Here is a 485-residue protein sequence, read N- to C-terminus: NADH-quinone oxidoreductase subunit N (485 aa).

Transmembrane regions (helical) follow at residues 8–28 (LIAL…MLSI), 35–55 (FLNA…LWFV), 71–91 (GFAM…CTFA), 105–125 (FYLL…ANHL), 127–147 (SLFL…GYAF), 159–179 (YTIL…LVYA), 203–223 (LLAG…LVPF), 235–255 (PAPV…GVVM), 271–291 (VVLA…ALSQ), 297–317 (LLGY…IALQ), 326–346 (VGVY…VVSL), 373–393 (AAVM…LGFI), 408–430 (WWLV…RVAV), and 455–475 (IVVL…QPLI).

This sequence belongs to the complex I subunit 2 family. As to quaternary structure, NDH-1 is composed of 13 different subunits. Subunits NuoA, H, J, K, L, M, N constitute the membrane sector of the complex.

It localises to the cell inner membrane. It carries out the reaction a quinone + NADH + 5 H(+)(in) = a quinol + NAD(+) + 4 H(+)(out). NDH-1 shuttles electrons from NADH, via FMN and iron-sulfur (Fe-S) centers, to quinones in the respiratory chain. The immediate electron acceptor for the enzyme in this species is believed to be ubiquinone. Couples the redox reaction to proton translocation (for every two electrons transferred, four hydrogen ions are translocated across the cytoplasmic membrane), and thus conserves the redox energy in a proton gradient. In Escherichia coli O7:K1 (strain IAI39 / ExPEC), this protein is NADH-quinone oxidoreductase subunit N.